Here is a 458-residue protein sequence, read N- to C-terminus: ATP synthase subunit beta (458 aa).

148-155 lines the ATP pocket; that stretch reads GGAGVGKT.

Belongs to the ATPase alpha/beta chains family. F-type ATPases have 2 components, CF(1) - the catalytic core - and CF(0) - the membrane proton channel. CF(1) has five subunits: alpha(3), beta(3), gamma(1), delta(1), epsilon(1). CF(0) has three main subunits: a(1), b(2) and c(9-12). The alpha and beta chains form an alternating ring which encloses part of the gamma chain. CF(1) is attached to CF(0) by a central stalk formed by the gamma and epsilon chains, while a peripheral stalk is formed by the delta and b chains.

The protein localises to the cell inner membrane. The catalysed reaction is ATP + H2O + 4 H(+)(in) = ADP + phosphate + 5 H(+)(out). In terms of biological role, produces ATP from ADP in the presence of a proton gradient across the membrane. The catalytic sites are hosted primarily by the beta subunits. This chain is ATP synthase subunit beta, found in Francisella tularensis subsp. tularensis (strain FSC 198).